We begin with the raw amino-acid sequence, 249 residues long: Enolase-phosphatase E1 (249 aa).

This sequence belongs to the HAD-like hydrolase superfamily. MasA/MtnC family. Monomer. Mg(2+) serves as cofactor.

It carries out the reaction 5-methylsulfanyl-2,3-dioxopentyl phosphate + H2O = 1,2-dihydroxy-5-(methylsulfanyl)pent-1-en-3-one + phosphate. It participates in amino-acid biosynthesis; L-methionine biosynthesis via salvage pathway; L-methionine from S-methyl-5-thio-alpha-D-ribose 1-phosphate: step 3/6. The protein operates within amino-acid biosynthesis; L-methionine biosynthesis via salvage pathway; L-methionine from S-methyl-5-thio-alpha-D-ribose 1-phosphate: step 4/6. Its function is as follows. Bifunctional enzyme that catalyzes the enolization of 2,3-diketo-5-methylthiopentyl-1-phosphate (DK-MTP-1-P) into the intermediate 2-hydroxy-3-keto-5-methylthiopentenyl-1-phosphate (HK-MTPenyl-1-P), which is then dephosphorylated to form the acireductone 1,2-dihydroxy-3-keto-5-methylthiopentene (DHK-MTPene). This is Enolase-phosphatase E1 from Synechococcus sp. (strain RCC307).